The following is a 135-amino-acid chain: T-cell receptor gamma chain V region 5/10-13 (135 aa).

The first 18 residues, 1–18 (MLLLRWPTFCCLWVFGLG), serve as a signal peptide directing secretion. Positions 19–114 (QLEQTELSVT…DEATYYCAVC (96 aa)) are v segment. The interval 115-135 (RSGTSWVKIFAKGTKLVVIPP) is j segment.

This Mus musculus (Mouse) protein is T-cell receptor gamma chain V region 5/10-13 (Tcrg-V1).